A 305-amino-acid polypeptide reads, in one-letter code: Ribosomal RNA small subunit methyltransferase H (305 aa).

S-adenosyl-L-methionine-binding positions include Gly33–His35, Asp52, Asp97, and Gln104.

It belongs to the methyltransferase superfamily. RsmH family.

It is found in the cytoplasm. It carries out the reaction cytidine(1402) in 16S rRNA + S-adenosyl-L-methionine = N(4)-methylcytidine(1402) in 16S rRNA + S-adenosyl-L-homocysteine + H(+). Specifically methylates the N4 position of cytidine in position 1402 (C1402) of 16S rRNA. This is Ribosomal RNA small subunit methyltransferase H from Campylobacter lari (strain RM2100 / D67 / ATCC BAA-1060).